Consider the following 302-residue polypeptide: Uroporphyrinogen-III synthase, chloroplastic (302 aa).

A disordered region spans residues 1–39 (MALSSSSHLLPFSRPPATFPRARHAGGGRGRAGATGRFI). Residues 1 to 50 (MALSSSSHLLPFSRPPATFPRARHAGGGRGRAGATGRFIACSSPPPPDVV) constitute a chloroplast transit peptide.

Belongs to the uroporphyrinogen-III synthase family.

The protein resides in the plastid. It localises to the chloroplast. It catalyses the reaction hydroxymethylbilane = uroporphyrinogen III + H2O. The protein operates within porphyrin-containing compound metabolism; protoporphyrin-IX biosynthesis; coproporphyrinogen-III from 5-aminolevulinate: step 3/4. Catalyzes cyclization of the linear tetrapyrrole, hydroxymethylbilane, to the macrocyclic uroporphyrinogen III, a precursor of tetrapyrroles such as chlorophyll, heme and phycobilins. The protein is Uroporphyrinogen-III synthase, chloroplastic (UROS) of Oryza sativa subsp. japonica (Rice).